The following is a 271-amino-acid chain: Elongation factor Ts (271 aa).

The tract at residues 76 to 79 (TDFV) is involved in Mg(2+) ion dislocation from EF-Tu.

This sequence belongs to the EF-Ts family.

Its subcellular location is the cytoplasm. In terms of biological role, associates with the EF-Tu.GDP complex and induces the exchange of GDP to GTP. It remains bound to the aminoacyl-tRNA.EF-Tu.GTP complex up to the GTP hydrolysis stage on the ribosome. This is Elongation factor Ts from Mycolicibacterium gilvum (strain PYR-GCK) (Mycobacterium gilvum (strain PYR-GCK)).